A 180-amino-acid polypeptide reads, in one-letter code: MDFRPDQVVARIRGAVEGALTAQSVLGIGGALVLILVVIALLPDRFTRGEGKTATAVSSGAAQALPAALPGLSPFTPAKPLQFSGRVTQVASIGNDVGWGQVHVWIDNGTGALQEISVAPQSYLNQIGCPSFDGARISGIGFLFDAGRPNAELYAKSVLVGGRTCKLRDDEGLALWMTVQ.

Residues 1 to 21 are Cytoplasmic-facing; that stretch reads MDFRPDQVVARIRGAVEGALT. The chain crosses the membrane as a helical span at residues 22 to 42; the sequence is AQSVLGIGGALVLILVVIALL. The Lumenal segment spans residues 43 to 180; that stretch reads PDRFTRGEGK…EGLALWMTVQ (138 aa).

The protein belongs to the magnetosome MamS family.

The protein resides in the magnetosome membrane. Functionally, may play a role in magnetite crystal growth and size. The chain is Magnetosome protein MamS from Magnetospirillum gryphiswaldense (strain DSM 6361 / JCM 21280 / NBRC 15271 / MSR-1).